Reading from the N-terminus, the 753-residue chain is Cytoplasmic polyadenylation element-binding protein 3 (753 aa).

The tract at residues 111 to 286 (VGESTPSSAG…NGSWHGELPP (176 aa)) is disordered. 2 stretches are compositionally biased toward basic and acidic residues: residues 131–142 (KPTEKISVDEPP) and 175–188 (FGKEEQKPEPEVVK). Positions 227 to 239 (SPAKISSNSSSSS) are enriched in low complexity. Polar residues predominate over residues 265–279 (SRQGLSNRDNLSNGS). The 23-residue stretch at 298 to 320 (IFVGGVPWDITEAALKDSFGEFG) folds into the RRM domain. The disordered stretch occupies residues 567 to 589 (KAYAGPHRRPHLTSNSLSKSHGC). Polar residues predominate over residues 578 to 589 (LTSNSLSKSHGC).

Functionally, cytoplasmic polyadenylation element binding protein that binds to and regulates the translation of specific mRNAs. The chain is Cytoplasmic polyadenylation element-binding protein 3 (cpb-3) from Caenorhabditis briggsae.